The chain runs to 75 residues: Putative membrane protein insertion efficiency factor (75 aa).

This sequence belongs to the UPF0161 family.

It is found in the cell membrane. Functionally, could be involved in insertion of integral membrane proteins into the membrane. The polypeptide is Putative membrane protein insertion efficiency factor (ytjA) (Bacillus subtilis (strain 168)).